Consider the following 1479-residue polypeptide: Type VII secretion system protein EssC (1479 aa).

Residues 1-229 (MHKLIIKYNK…RPPQPIQKNN (229 aa)) lie on the Cytoplasmic side of the membrane. The helical transmembrane segment at 230–252 (TVIWRSIIPPLVMIALTVVIFLV) threads the bilayer. At 253 to 256 (RPIG) the chain is on the extracellular side. The chain crosses the membrane as a helical span at residues 257–279 (IYILMMIGMSSVTIVFGITTYFS). Residues 280-1479 (EKKKYNKDVE…QAYQKIRWFK (1200 aa)) lie on the Cytoplasmic side of the membrane. FtsK domains follow at residues 652–846 (DDIL…QDSN) and 997–1183 (QGPM…SEVS). ATP contacts are provided by residues 672–679 (GTTGSGKS) and 1014–1021 (GSPGYGRT).

The protein belongs to the EssC family. As to quaternary structure, homooligomer. Interacts with EsaE.

The protein resides in the cell membrane. Component of the type VII secretion system (Ess). Required for the secretion of substrates including EsxA and EsxB. However, unable to support secretion of the substrate protein EsxC. This chain is Type VII secretion system protein EssC, found in Staphylococcus aureus (strain MSSA476).